Reading from the N-terminus, the 351-residue chain is RCC1 repeat-containing protein C10F6.04 (351 aa).

RCC1 repeat units lie at residues 1–48, 50–106, 108–162, and 163–212; these read MLLS…LLDE, SQLW…IVHA, RRRV…CVTN, and EGNL…VLQE.

The protein localises to the cytoplasm. It is found in the nucleus. This Schizosaccharomyces pombe (strain 972 / ATCC 24843) (Fission yeast) protein is RCC1 repeat-containing protein C10F6.04.